The following is an 804-amino-acid chain: G-type lectin S-receptor-like serine/threonine-protein kinase At1g61500 (804 aa).

Positions 1-24 (MMTRFACLHLFTMFLFTLLSGSSS) are cleaved as a signal peptide. One can recognise a Bulb-type lectin domain in the interval 25 to 145 (AVITTESPLS…VSERALWQSF (121 aa)). Topologically, residues 25 to 427 (AVITTESPLS…ELDGNKRKKT (403 aa)) are extracellular. N-linked (GlcNAc...) asparagine glycosylation is found at N54, N135, and N237. The EGF-like; atypical domain maps to 279–315 (PKKLCDFYGACGPFGLCVMSPSPMCKCFRGFVPKSVE). 2 disulfides stabilise this stretch: C283–C295 and C289–C303. Residues N321, N337, and N376 are each glycosylated (N-linked (GlcNAc...) asparagine). Positions 334-416 (CLGNSTGEDA…GELLSIRLAR (83 aa)) constitute a PAN domain. Intrachain disulfides connect C369–C390 and C373–C379. A helical transmembrane segment spans residues 428-448 (IVASIVSLTLFMILGFTAFGV). At 449-804 (WRCRVEHIAH…GMTQSVILGR (356 aa)) the chain is on the cytoplasmic side. Residues 491–776 (FSLSNKLGQG…DLPSPKQPTF (286 aa)) enclose the Protein kinase domain. Residues 497–505 (LGQGGFGSV) and K519 contribute to the ATP site. Residues S525 and S540 each carry the phosphoserine modification. Positions 580–597 (RKRLEIDWPKRFDIIQGI) are caM-binding. The Proton acceptor role is filled by D616. Phosphoserine is present on residues S620 and S633. The residue at position 650 (T650) is a Phosphothreonine. A phosphoserine mark is found at S693 and S787.

The protein belongs to the protein kinase superfamily. Ser/Thr protein kinase family.

The protein localises to the cell membrane. It carries out the reaction L-seryl-[protein] + ATP = O-phospho-L-seryl-[protein] + ADP + H(+). It catalyses the reaction L-threonyl-[protein] + ATP = O-phospho-L-threonyl-[protein] + ADP + H(+). The polypeptide is G-type lectin S-receptor-like serine/threonine-protein kinase At1g61500 (Arabidopsis thaliana (Mouse-ear cress)).